The chain runs to 116 residues: Photosystem II assembly factor Psb28 protein (116 aa).

The protein belongs to the Psb28 family. Part of a photosystem II (PSII) assembly intermediate complex PSII-I; crystallized from a strain deleted of psbJ, it forms monomeric PSII before addition of the oxygen evolving complex. PSII-I includes 3 assembly factors not found in mature PSII (Psb27, Psb28 and Psb34). This protein binds to the cytoplasmic face of D1 and D2 (psbA and psbD), contacting CP47 (psbB) directly above the quinone b-binding site.

The protein localises to the cellular thylakoid membrane. Its function is as follows. A photosystem II (PSII) assembly factor that binds PSII during biogenesis, protecting the complex until water splitting is activated. The chain is Photosystem II assembly factor Psb28 protein from Thermosynechococcus vestitus (strain NIES-2133 / IAM M-273 / BP-1).